Here is a 283-residue protein sequence, read N- to C-terminus: MIQMVPIYSCSALLRRTIPKRPFYHVLSGLTVRFKVNPQLNYNLFRDLTRREYATNPSKTPHIKSKLLNIPNILTLSRIGCTPFIGLFIITNNLTPALGLFAFSSITDFMDGYIARKYGLKTIAGTILDPLADKLLMITTTLALSVPSGPQIIPVSIAAIILGRDVLLAISALFIRYSTLKLKYPGRVAWNSYWDIVRYPSAEVRPSQLSKWNTFFQMVYLGSGVLLLLYEKEEGCEKTEEDFEDRKQDFQKAFSYLGYVTATTTIMSGVSYALKRNAFKLLK.

3 consecutive transmembrane segments (helical) span residues 83 to 103 (PFIGLFIITNNLTPALGLFAF), 155 to 175 (VSIAAIILGRDVLLAISALFI), and 209 to 229 (LSKWNTFFQMVYLGSGVLLLL).

Belongs to the CDP-alcohol phosphatidyltransferase class-I family. May be found in a large complex. Mg(2+) serves as cofactor.

It localises to the mitochondrion inner membrane. The enzyme catalyses a CDP-1,2-diacyl-sn-glycerol + a 1,2-diacyl-sn-glycero-3-phospho-(1'-sn-glycerol) = a cardiolipin + CMP + H(+). In terms of biological role, catalyzes the synthesis of cardiolipin (CL) (diphosphatidylglycerol) by specifically transferring a phosphatidyl group from CDP-diacylglycerol to phosphatidylglycerol (PG). CL is a key phospholipid in mitochondrial membranes and plays important roles in maintaining the functional integrity and dynamics of mitochondria under both optimal and stress conditions. The sequence is that of Cardiolipin synthase (CMP-forming) (CRD1) from Saccharomyces cerevisiae (strain ATCC 204508 / S288c) (Baker's yeast).